The sequence spans 214 residues: Holliday junction branch migration complex subunit RuvA (214 aa).

The segment at 1 to 63 (MISFLRGPVA…EDSMTLYGFA (63 aa)) is domain I. The tract at residues 64–139 (DPDEREVFEI…KLVPHGTVNG (76 aa)) is domain II. A flexible linker region spans residues 139–143 (GAPAS). The segment at 144 to 214 (PSAQWKPQVV…SAGRQVTARG (71 aa)) is domain III.

The protein belongs to the RuvA family. Homotetramer. Forms an RuvA(8)-RuvB(12)-Holliday junction (HJ) complex. HJ DNA is sandwiched between 2 RuvA tetramers; dsDNA enters through RuvA and exits via RuvB. An RuvB hexamer assembles on each DNA strand where it exits the tetramer. Each RuvB hexamer is contacted by two RuvA subunits (via domain III) on 2 adjacent RuvB subunits; this complex drives branch migration. In the full resolvosome a probable DNA-RuvA(4)-RuvB(12)-RuvC(2) complex forms which resolves the HJ.

The protein localises to the cytoplasm. Functionally, the RuvA-RuvB-RuvC complex processes Holliday junction (HJ) DNA during genetic recombination and DNA repair, while the RuvA-RuvB complex plays an important role in the rescue of blocked DNA replication forks via replication fork reversal (RFR). RuvA specifically binds to HJ cruciform DNA, conferring on it an open structure. The RuvB hexamer acts as an ATP-dependent pump, pulling dsDNA into and through the RuvAB complex. HJ branch migration allows RuvC to scan DNA until it finds its consensus sequence, where it cleaves and resolves the cruciform DNA. This chain is Holliday junction branch migration complex subunit RuvA, found in Renibacterium salmoninarum (strain ATCC 33209 / DSM 20767 / JCM 11484 / NBRC 15589 / NCIMB 2235).